Here is an 830-residue protein sequence, read N- to C-terminus: DNA helicase MCM8 (830 aa).

One can recognise an MCM domain in the interval 394-601 (LFRIIVNSLC…DHDHLLSEHV (208 aa)). 446-453 (GDPGLGKS) provides a ligand contact to ATP.

This sequence belongs to the MCM family. Component of the MCM8-MCM9 complex, which forms a hexamer composed of MCM8 and MCM9.

It localises to the nucleus. It carries out the reaction ATP + H2O = ADP + phosphate + H(+). Component of the MCM8-MCM9 complex, a complex involved in homologous recombination repair following DNA interstrand cross-links and plays a key role during gametogenesis. The MCM8-MCM9 complex probably acts as a hexameric helicase required to process aberrant forks into homologous recombination substrates and to orchestrate homologous recombination with resection, fork stabilization and fork restart. The polypeptide is DNA helicase MCM8 (MCM8) (Gallus gallus (Chicken)).